We begin with the raw amino-acid sequence, 142 residues long: Large ribosomal subunit protein uL13 (142 aa).

The protein belongs to the universal ribosomal protein uL13 family. Part of the 50S ribosomal subunit.

Functionally, this protein is one of the early assembly proteins of the 50S ribosomal subunit, although it is not seen to bind rRNA by itself. It is important during the early stages of 50S assembly. The protein is Large ribosomal subunit protein uL13 of Histophilus somni (strain 129Pt) (Haemophilus somnus).